Reading from the N-terminus, the 404-residue chain is Tripartite motif-containing 13 (404 aa).

Residues 10–56 (CPICCCLFEDPRVLPCSHSFCKKCLEGILDGNRSPTWRPPFKCPTCR) form an RING-type zinc finger. The B box-type zinc-finger motif lies at 87–129 (PRMSQCRVHSGQPLNIFCATDLKLICGFCATTGDHKGHKFCAL). 4 residues coordinate Zn(2+): C92, H95, C115, and H121. A helical transmembrane segment spans residues 102 to 119 (IFCATDLKLICGFCATTG). Positions 186 to 236 (KLLRTLEHKRSEILSDLETLKLAVMQTFDPEINRLRSALEEQRRALNIAES) form a coiled coil.

The protein localises to the endoplasmic reticulum membrane. Its pathway is protein modification; protein ubiquitination. In terms of biological role, E3 ubiquitin ligase involved in the retrotranslocation and turnover of membrane and secretory proteins from the ER through a set of processes named ER-associated degradation (ERAD). This process acts on misfolded proteins as well as in the regulated degradation of correctly folded proteins. The polypeptide is Tripartite motif-containing 13 (trim13) (Danio rerio (Zebrafish)).